Consider the following 147-residue polypeptide: Elongation factor Tu (147 aa).

It belongs to the GTP-binding elongation factor family. EF-Tu/EF-1A subfamily. As to quaternary structure, monomer.

The protein resides in the cytoplasm. Its function is as follows. This protein promotes the GTP-dependent binding of aminoacyl-tRNA to the A-site of ribosomes during protein biosynthesis. This chain is Elongation factor Tu (tuf), found in Fructilactobacillus sanfranciscensis (Lactobacillus sanfranciscensis).